The primary structure comprises 180 residues: Adenine phosphoribosyltransferase (180 aa).

The protein belongs to the purine/pyrimidine phosphoribosyltransferase family. Homodimer.

It is found in the cytoplasm. The enzyme catalyses AMP + diphosphate = 5-phospho-alpha-D-ribose 1-diphosphate + adenine. The protein operates within purine metabolism; AMP biosynthesis via salvage pathway; AMP from adenine: step 1/1. Its function is as follows. Catalyzes a salvage reaction resulting in the formation of AMP, that is energically less costly than de novo synthesis. This chain is Adenine phosphoribosyltransferase, found in Mycoplasma genitalium (strain ATCC 33530 / DSM 19775 / NCTC 10195 / G37) (Mycoplasmoides genitalium).